Here is a 608-residue protein sequence, read N- to C-terminus: Elongation factor 4 (608 aa).

In terms of domain architecture, tr-type G spans 11 to 193 (SHIRNFSIVA…AIVHKLPAPK (183 aa)). Residues 23–28 (DHGKST) and 140–143 (NKID) each bind GTP.

The protein belongs to the TRAFAC class translation factor GTPase superfamily. Classic translation factor GTPase family. LepA subfamily.

The protein localises to the cell inner membrane. It catalyses the reaction GTP + H2O = GDP + phosphate + H(+). Its function is as follows. Required for accurate and efficient protein synthesis under certain stress conditions. May act as a fidelity factor of the translation reaction, by catalyzing a one-codon backward translocation of tRNAs on improperly translocated ribosomes. Back-translocation proceeds from a post-translocation (POST) complex to a pre-translocation (PRE) complex, thus giving elongation factor G a second chance to translocate the tRNAs correctly. Binds to ribosomes in a GTP-dependent manner. In Rhizobium meliloti (strain 1021) (Ensifer meliloti), this protein is Elongation factor 4.